We begin with the raw amino-acid sequence, 134 residues long: Holo-[acyl-carrier-protein] synthase (134 aa).

Positions 8 and 57 each coordinate Mg(2+).

It belongs to the P-Pant transferase superfamily. AcpS family. Mg(2+) serves as cofactor.

It localises to the cytoplasm. It carries out the reaction apo-[ACP] + CoA = holo-[ACP] + adenosine 3',5'-bisphosphate + H(+). Its function is as follows. Transfers the 4'-phosphopantetheine moiety from coenzyme A to a Ser of acyl-carrier-protein. This chain is Holo-[acyl-carrier-protein] synthase, found in Roseobacter denitrificans (strain ATCC 33942 / OCh 114) (Erythrobacter sp. (strain OCh 114)).